A 581-amino-acid chain; its full sequence is Pyridine nucleotide-disulfide oxidoreductase domain-containing protein 2 (581 aa).

38-71 (VVIGAGHNGLVAAAYLQRLGVNTAVFERRHVIGG) lines the FAD pocket.

The protein belongs to the carotenoid/retinoid oxidoreductase family. In terms of assembly, interacts with COX5B; this interaction may contribute to localize PYROXD2 to the inner face of the inner mitochondrial membrane.

It is found in the mitochondrion matrix. Probable oxidoreductase that may play a role as regulator of mitochondrial function. This chain is Pyridine nucleotide-disulfide oxidoreductase domain-containing protein 2, found in Rattus norvegicus (Rat).